Consider the following 592-residue polypeptide: NADH-ubiquinone oxidoreductase chain 5 (592 aa).

A run of 14 helical transmembrane segments spans residues 36–56, 68–88, 89–109, 132–152, 169–189, 196–216, 229–249, 256–276, 279–299, 322–342, 364–386, 406–426, 451–471, and 534–554; these read LSMV…IYAI, FYII…SDNY, IMMF…ISFW, LFVI…FETM, MMLL…GWLL, TPVS…FVLV, LLVM…MAVV, VMAL…GSSA, LAMY…MSAG, LPFS…MPGL, YIMY…RVTY, STHM…LGYA, LPAM…LTTV, and ALIN…IVFF.

The protein belongs to the complex I subunit 5 family.

It localises to the mitochondrion inner membrane. It catalyses the reaction a ubiquinone + NADH + 5 H(+)(in) = a ubiquinol + NAD(+) + 4 H(+)(out). Its function is as follows. Core subunit of the mitochondrial membrane respiratory chain NADH dehydrogenase (Complex I) that is believed to belong to the minimal assembly required for catalysis. Complex I functions in the transfer of electrons from NADH to the respiratory chain. The immediate electron acceptor for the enzyme is believed to be ubiquinone. This Debaryomyces hansenii (strain ATCC 36239 / CBS 767 / BCRC 21394 / JCM 1990 / NBRC 0083 / IGC 2968) (Yeast) protein is NADH-ubiquinone oxidoreductase chain 5 (ND5).